A 134-amino-acid chain; its full sequence is D-ribose pyranase (134 aa).

The active-site Proton donor is His20. Substrate contacts are provided by residues Asp28, His101, and 123–125 (YCN).

Belongs to the RbsD / FucU family. RbsD subfamily. Homodecamer.

It localises to the cytoplasm. The catalysed reaction is beta-D-ribopyranose = beta-D-ribofuranose. It participates in carbohydrate metabolism; D-ribose degradation; D-ribose 5-phosphate from beta-D-ribopyranose: step 1/2. Functionally, catalyzes the interconversion of beta-pyran and beta-furan forms of D-ribose. The sequence is that of D-ribose pyranase from Pseudomonas fluorescens (strain ATCC BAA-477 / NRRL B-23932 / Pf-5).